A 1427-amino-acid chain; its full sequence is Coiled-coil domain-containing protein 144A (1427 aa).

Residues 1–11 (MASWGGEKRGG) are compositionally biased toward basic and acidic residues. 5 disordered regions span residues 1-32 (MASWGGEKRGGAEGSPKPAVYATRKTPSVGSQ), 87-189 (AARS…LTER), 213-261 (LPEN…CDRE), 453-485 (NMNQNSDSGSTNNYKSLKPKLENLSSLPPDSDR), and 528-586 (EEEM…EVKN). Composition is skewed to polar residues over residues 129-150 (PESLPQNNNPDWHPTNLTLSDE) and 167-178 (VSPSMPENQSAT). Residues 224-234 (QDSELTSEEEQ) are compositionally biased toward acidic residues. Positions 453-467 (NMNQNSDSGSTNNYK) are enriched in polar residues. The stretch at 490–545 (YLHEELQQDMQKFKNEVNTLEEEFLALKKEDVQLHKDVEEEMEKHRSNSTELSGTL) forms a coiled coil. Basic and acidic residues predominate over residues 528–537 (EEEMEKHRSN). The span at 543–552 (GTLTDGTTVG) shows a compositional bias: low complexity. Basic and acidic residues predominate over residues 563 to 584 (PRKENGEHDRPADKTSNEKNEV). 2 coiled-coil regions span residues 648–1129 (LLKL…DLTE) and 1155–1309 (FSMK…TQLT).

Belongs to the CCDC144 family.

Functionally, may play a role in preventing the formation of kidney stones through inhibition of calcium oxalate monohydrate (COM) crystallization, attenuating COM-induced apoptotic injury to renal epithelial cells. May exhibit antilithiatic (preventing the formation of kidney stones) activity through crystal binding, hindering the crystal attachment to renal epithelial cells, a pre-requisite to initiate inflammatory response. The polypeptide is Coiled-coil domain-containing protein 144A (CCDC144A) (Homo sapiens (Human)).